The chain runs to 531 residues: Bifunctional aspartate aminotransferase and L-aspartate beta-decarboxylase (531 aa).

The L-aspartate site is built by Gly-114 and Asn-255. Lys-314 is subject to N6-(pyridoxal phosphate)lysine. An L-aspartate-binding site is contributed by Arg-496.

It belongs to the class-I pyridoxal-phosphate-dependent aminotransferase family. As to quaternary structure, homododecamer. Requires pyridoxal 5'-phosphate as cofactor.

It carries out the reaction L-aspartate + H(+) = L-alanine + CO2. The catalysed reaction is L-aspartate + 2-oxoglutarate = oxaloacetate + L-glutamate. Inhibited by 10 mM Co(2+), Mn(2+) and Ni(2+), and by 1 mM Cu(2+) and Hg(2+). Bifunctional enzyme that has both L-aspartate decarboxylase and transaminase activity. Has high activity with L-aspartate, and much lower activity with D-aspartate, L-lysine and L-glutamine. This Pseudomonas sp protein is Bifunctional aspartate aminotransferase and L-aspartate beta-decarboxylase.